Consider the following 420-residue polypeptide: Carbohydrate sulfotransferase 12 (420 aa).

At 1–5 the chain is on the cytoplasmic side; it reads MAKSR. Residues 6-26 traverse the membrane as a helical; Signal-anchor for type II membrane protein segment; the sequence is LFCLLVALGSVFMILFIIVYW. The Lumenal segment spans residues 27–420; sequence DNVGTANLNL…YPKPDDLLSV (394 aa). Residues Asn76 and Asn139 are each glycosylated (N-linked (GlcNAc...) asparagine). 3'-phosphoadenylyl sulfate is bound at residue 176–182; it reads PKVACTN. An N-linked (GlcNAc...) asparagine glycan is attached at Asn215. 251–259 is a 3'-phosphoadenylyl sulfate binding site; the sequence is RDPFVRLIS. Residues Asn286 and Asn376 are each glycosylated (N-linked (GlcNAc...) asparagine).

This sequence belongs to the sulfotransferase 2 family.

The protein localises to the golgi apparatus membrane. The enzyme catalyses chondroitin beta-D-glucuronate + n 3'-phosphoadenylyl sulfate = chondroitin 4'-sulfate + n adenosine 3',5'-bisphosphate + n H(+). Its function is as follows. Catalyzes the transfer of sulfate to position 4 of the N-acetylgalactosamine (GalNAc) residue of chondroitin and desulfated dermatan sulfate. Chondroitin sulfate constitutes the predominant proteoglycan present in cartilage and is distributed on the surfaces of many cells and extracellular matrices. The protein is Carbohydrate sulfotransferase 12 (chst12) of Xenopus laevis (African clawed frog).